Here is a 740-residue protein sequence, read N- to C-terminus: F-BAR and double SH3 domains protein 2 (740 aa).

An F-BAR domain is found at valine 8–asparagine 282. The tract at residues proline 303–serine 323 is disordered. The segment covering aspartate 307–serine 323 has biased composition (basic and acidic residues). Residues glycine 356–glutamine 397 adopt a coiled-coil conformation. SH3 domains follow at residues asparagine 469–serine 530 and alanine 567–alanine 629. The required and sufficient for location at clathrin-coated pits stretch occupies residues alanine 567–alanine 629. The segment at glycine 633 to valine 740 is disordered. Over residues serine 646–proline 657 the composition is skewed to pro residues. A phosphoserine mark is found at serine 675 and serine 681.

In terms of assembly, homodimer. Interacts (via SH3 domain 2) with ITSN1 (via SH3 domain 4). Recruited to clathrin-coated pits during a mid-to-late stage of assembly via interaction with ITSN1. Interacts (via SH3 domain 1) with WASL. Interacts with WAS. Interacts with CASK and MAGI1. CASK inhibits interaction with MAGI1. In terms of processing, phosphorylated. Phosphorylation on a Ser residue is important for recruitment to the cell membrane and for its role in promoting endocytosis. As to expression, liver, brain, heart, placenta, skeletal muscle, pancreas, lung and kidney.

It is found in the cytoplasm. The protein localises to the cell junction. Its subcellular location is the membrane. The protein resides in the clathrin-coated pit. It localises to the cell membrane. It is found in the cell projection. The protein localises to the stereocilium. Adapter protein that plays a role in endocytosis via clathrin-coated pits. Contributes to the internalization of cell surface receptors, such as integrin ITGB1 and transferrin receptor. Promotes endocytosis of EGFR in cancer cells, and thereby contributes to the down-regulation of EGFR signaling. Recruited to clathrin-coated pits during a mid-to-late stage of assembly, where it is required for normal progress from U-shaped intermediate stage pits to terminal, omega-shaped pits. Binds to membranes enriched in phosphatidylinositol 3,4-bisphosphate or phosphatidylinositol 3,4,5-trisphosphate. When bound to membranes, promotes actin polymerization via its interaction with WAS and/or WASL which leads to the activation of the Arp2/3 complex. Does not promote actin polymerisation in the absence of membranes. The sequence is that of F-BAR and double SH3 domains protein 2 (FCHSD2) from Homo sapiens (Human).